Here is a 502-residue protein sequence, read N- to C-terminus: MMKPDLNSPLPQSPQLQAFGSRSSDLATEDLFLKKLEAISQTAPNETVKNEFLNKEIPSINKLFTRFLKNRKKVIDWDKINPPPADMVLNYKDLPAITEQRTSELASKLAVLKLNGGLGTTMGCTGPKSVIEVRSEKTFLDLSVQQIKEMNERYNIKVPLVLMNSFNTHQETGKIIQKYKYSDVKIHSFNQSRFPRILKDNLMPVPDKLFGSDSEWYPPGHGDVFFALQNSGLLETLINEGKEYLFISNVDNLGAVVDFNILEAMDKNKVEYIMEVTNKTRADVKGGTLIQYEGKAKLLEIAQVPSSKVEEFKSIKKFKIFNTNNIWVNLKAMDRILKQNLLDDMDIIINPKVADGKNIIQLEIAAGAAIEFFNNARGVNVPRSRFLPVKSTSDLFIVQSNLYSLEKGVLVMNKNRPFTTVPLVKLGDNFKKVSDYQARIKGIPDILELDQLTVSGDITFGPNMVLKGTVIIVANHGSRIDIPEGSEFENKVVSGNLHCGAL.

The disordered stretch occupies residues 1 to 20; sequence MMKPDLNSPLPQSPQLQAFG. The segment covering 9–20 has biased composition (polar residues); that stretch reads PLPQSPQLQAFG. UTP is bound by residues 114–117, Lys-128, Gln-191, and Gly-220; that span reads LNGG. 116–117 is a binding site for substrate; the sequence is GG. Substrate contacts are provided by residues His-221 and 249–251; that span reads NVD. UTP contacts are provided by Asp-251 and Lys-390.

Belongs to the UDPGP type 1 family.

The catalysed reaction is alpha-D-glucose 1-phosphate + UTP + H(+) = UDP-alpha-D-glucose + diphosphate. Functionally, plays a central role as a glucosyl donor in cellular metabolic pathways. This is UTP--glucose-1-phosphate uridylyltransferase 2 (ugpB) from Dictyostelium discoideum (Social amoeba).